The following is a 137-amino-acid chain: Flagellar basal body rod protein FlgB (137 aa).

This sequence belongs to the flagella basal body rod proteins family. The basal body constitutes a major portion of the flagellar organelle and consists of a number of rings mounted on a central rod. In Gram-negative bacteria, at least four rings, L, P, S and M are present, whereas Gram-positive bacteria lack the L and P rings. The rod consists of about 26 subunits of FlgG in the distal portion, and FlgB, FlgC and FlgF build up the proximal portion of the rod with about 6 subunits each. Rod assembly occurs by export via the flagellum-specific pathway of its constituent proteins and by their incorporation into the rod structure in the probable order of FlgB, FlgC, FlgF and FlgG. Another protein, FliE, also assembles onto the stable rod structure.

Its subcellular location is the bacterial flagellum basal body. In terms of biological role, structural component of flagellum, the bacterial motility apparatus. Part of the rod structure of flagellar basal body. The chain is Flagellar basal body rod protein FlgB from Proteus mirabilis (strain HI4320).